The following is a 64-amino-acid chain: Small ribosomal subunit protein bS21 (64 aa).

The protein belongs to the bacterial ribosomal protein bS21 family.

This chain is Small ribosomal subunit protein bS21, found in Karelsulcia muelleri (strain GWSS) (Sulcia muelleri).